A 318-amino-acid chain; its full sequence is ADP-L-glycero-D-manno-heptose-6-epimerase (318 aa).

NADP(+)-binding positions include 10-11 (FI), 31-32 (DN), Lys-38, Lys-53, 76-80 (QGACS), and Asn-93. Tyr-141 acts as the Proton acceptor in catalysis. Residue Lys-145 participates in NADP(+) binding. Substrate is bound at residue Asn-172. NADP(+)-binding residues include Val-173 and Lys-181. Lys-181 (proton acceptor) is an active-site residue. Substrate is bound by residues Arg-183, His-190, 204 to 207 (FEGS), Arg-212, and Tyr-276.

The protein belongs to the NAD(P)-dependent epimerase/dehydratase family. HldD subfamily. Homopentamer. NADP(+) is required as a cofactor.

The catalysed reaction is ADP-D-glycero-beta-D-manno-heptose = ADP-L-glycero-beta-D-manno-heptose. Its pathway is nucleotide-sugar biosynthesis; ADP-L-glycero-beta-D-manno-heptose biosynthesis; ADP-L-glycero-beta-D-manno-heptose from D-glycero-beta-D-manno-heptose 7-phosphate: step 4/4. In terms of biological role, catalyzes the interconversion between ADP-D-glycero-beta-D-manno-heptose and ADP-L-glycero-beta-D-manno-heptose via an epimerization at carbon 6 of the heptose. This chain is ADP-L-glycero-D-manno-heptose-6-epimerase, found in Brachyspira hyodysenteriae (strain ATCC 49526 / WA1).